Here is a 403-residue protein sequence, read N- to C-terminus: Argininosuccinate synthase (403 aa).

ATP-binding positions include 12–20 (AYSGGLDTS) and alanine 39. L-citrulline is bound by residues tyrosine 91 and serine 96. An ATP-binding site is contributed by glycine 121. The L-aspartate site is built by threonine 123, asparagine 127, and aspartate 128. An L-citrulline-binding site is contributed by asparagine 127. Residues arginine 131, serine 180, serine 189, glutamate 265, and tyrosine 277 each coordinate L-citrulline.

Belongs to the argininosuccinate synthase family. Type 1 subfamily. As to quaternary structure, homotetramer.

It localises to the cytoplasm. It carries out the reaction L-citrulline + L-aspartate + ATP = 2-(N(omega)-L-arginino)succinate + AMP + diphosphate + H(+). The protein operates within amino-acid biosynthesis; L-arginine biosynthesis; L-arginine from L-ornithine and carbamoyl phosphate: step 2/3. The polypeptide is Argininosuccinate synthase (Vibrio vulnificus (strain CMCP6)).